Reading from the N-terminus, the 503-residue chain is GMP synthase [glutamine-hydrolyzing] (503 aa).

The Glutamine amidotransferase type-1 domain occupies 1-178 (MREANVYSEI…LHRAAGIPAD (178 aa)). Cysteine 60 serves as the catalytic Nucleophile. Active-site residues include histidine 152 and glutamate 154. Residues 179–377 (WNSGNVIADQ…LGLPEVIVGR (199 aa)) form the GMPS ATP-PPase domain. 206–212 (SGGVDSA) serves as a coordination point for ATP.

In terms of assembly, homodimer.

The enzyme catalyses XMP + L-glutamine + ATP + H2O = GMP + L-glutamate + AMP + diphosphate + 2 H(+). The protein operates within purine metabolism; GMP biosynthesis; GMP from XMP (L-Gln route): step 1/1. Its function is as follows. Catalyzes the synthesis of GMP from XMP. The protein is GMP synthase [glutamine-hydrolyzing] of Leifsonia xyli subsp. xyli (strain CTCB07).